A 302-amino-acid chain; its full sequence is Ubiquitin thioesterase OTU1 (302 aa).

A UBX-like region spans residues 5–83 (RCKARSGTQP…IVEEDTSKPS (79 aa)). One can recognise an OTU domain in the interval 103 to 228 (LARRVVPADN…GIHYDPLERK (126 aa)). Residues 108–114 (VPADNSC) form a cys-loop region. Asp-111 is a catalytic residue. Cys-114 functions as the Nucleophile in the catalytic mechanism. The tract at residues 167–177 (IRREETWGGAI) is variable-loop. The his-loop stretch occupies residues 217–221 (YDGIH). Ile-220 contacts substrate. The active site involves His-221. The S2 site stretch occupies residues 245 to 250 (DVVLAQ). Residues 272 to 296 (LRCMVCQKGLTGQVEAREHAKETGH) form a C2H2-type zinc finger. His-296 is an active-site residue.

Its subcellular location is the cytoplasm. It carries out the reaction Thiol-dependent hydrolysis of ester, thioester, amide, peptide and isopeptide bonds formed by the C-terminal Gly of ubiquitin (a 76-residue protein attached to proteins as an intracellular targeting signal).. Functionally, hydrolase that can remove conjugated ubiquitin from proteins and participates in endoplasmic reticulum-associated degradation (ERAD) for misfolded lumenal proteins. May act by triming the ubiquitin chain on the associated substrate to facilitate their threading through the VCP/p97 pore. Ubiquitin moieties on substrates may present a steric impediment to the threading process when the substrate is transferred to the VCP pore and threaded through VCP's axial channel. Mediates deubiquitination of 'Lys-27'-, 'Lys-29'- and 'Lys-33'-linked polyubiquitin chains. Also able to hydrolyze 'Lys-11'-linked ubiquitin chains. Cleaves both polyubiquitin and di-ubiquitin. This is Ubiquitin thioesterase OTU1 (YOD1) from Gallus gallus (Chicken).